The sequence spans 949 residues: MTKSLSDLLQTNDFTRRHIGPSEAEQAEMLGVLGVSSLDELTQTTLPAAIQFDGELHTGPGMTEAQALAELKAVAQKNKVFRSYIGMGYAGTDVPPVILRNMLENPGWYTAYTPYQAEISQGRLEMLLNFQQTVQDMTGMPVSNASLLDEATAAAEAMTLAKRQSKNKGSNVFFVADNVHPQTMDVVKTRAEYFGFEVQTGSADAIPEGAFGALVQYPGTHGEVLNLAPIAEKAHTQGAALIVATDLLACALLTPPGEQGADIVVGSAQRFGVPMGFGGPHAAFLACQKGFERSMPGRVIGVSKDVRGNTALRMAMQTREQHIRREKATSNICTAQALLANMAAAYAVWHGPEGIKTIAERVHRLTGILAKALQDAGIKANETFFDTLTFEGQDDLGARAEAKGINFRLDGGKVGISLDETVTPQDLADIIEVVTGKGVDVQKLDAEAVDGIPAPLKRQSDFLTHPVFNTHHSEHGMLRYLKQLENKDYSLTHGMIPLGSCTMKLNATTEMIPVTWPEFGGLHPFAPESQTQGYAEMLAELERWLADITGYDAVSMQPNSGAQGEYAGLLVIRKYHEARGEAHRNICLIPASAHGTNPASAAMMGMQVVVVKTDEQGNIDFDDLKAQAEAHSDHLAALMITYPSTHGVYEENVRDVCDLIHQHGGQVYLDGANMNAMVGVAKPGLIGGDVSHLNLHKTFAIPHGGGGPGMGPIGVKAHLAPFLPNHAVAPTSDSHTGAVSAAPYGSASILPISYLYIKLLGAAGLRQSTQVALLNANYIAKRLSGAFPVLYSGKGGRVAHECILDIRPLKQESGVSEEDIAKRLMDYGFHAPTMSFPVPGTLMIEPTESEPKAELDRFVDAMLNIRREIQDVQDGTISAADSPLKHAPHTLKDLMDSEWTRAYSRETGAFPSAAQKAWKYWPAVNRVDNVYGDRNFVCSCPPIEDYIGA.

Lys697 carries the post-translational modification N6-(pyridoxal phosphate)lysine.

Belongs to the GcvP family. The glycine cleavage system is composed of four proteins: P, T, L and H. Pyridoxal 5'-phosphate serves as cofactor.

The catalysed reaction is N(6)-[(R)-lipoyl]-L-lysyl-[glycine-cleavage complex H protein] + glycine + H(+) = N(6)-[(R)-S(8)-aminomethyldihydrolipoyl]-L-lysyl-[glycine-cleavage complex H protein] + CO2. Functionally, the glycine cleavage system catalyzes the degradation of glycine. The P protein binds the alpha-amino group of glycine through its pyridoxal phosphate cofactor; CO(2) is released and the remaining methylamine moiety is then transferred to the lipoamide cofactor of the H protein. In Deinococcus radiodurans (strain ATCC 13939 / DSM 20539 / JCM 16871 / CCUG 27074 / LMG 4051 / NBRC 15346 / NCIMB 9279 / VKM B-1422 / R1), this protein is Glycine dehydrogenase (decarboxylating).